The chain runs to 123 residues: Small ribosomal subunit protein uS12 (123 aa).

D89 carries the post-translational modification 3-methylthioaspartic acid.

The protein belongs to the universal ribosomal protein uS12 family. In terms of assembly, part of the 30S ribosomal subunit. Contacts proteins S8 and S17. May interact with IF1 in the 30S initiation complex.

With S4 and S5 plays an important role in translational accuracy. In terms of biological role, interacts with and stabilizes bases of the 16S rRNA that are involved in tRNA selection in the A site and with the mRNA backbone. Located at the interface of the 30S and 50S subunits, it traverses the body of the 30S subunit contacting proteins on the other side and probably holding the rRNA structure together. The combined cluster of proteins S8, S12 and S17 appears to hold together the shoulder and platform of the 30S subunit. This is Small ribosomal subunit protein uS12 from Orientia tsutsugamushi (strain Boryong) (Rickettsia tsutsugamushi).